A 180-amino-acid polypeptide reads, in one-letter code: Large ribosomal subunit protein uL5 (180 aa).

It belongs to the universal ribosomal protein uL5 family. Part of the 50S ribosomal subunit; part of the 5S rRNA/L5/L18/L25 subcomplex. Contacts the 5S rRNA and the P site tRNA. Forms a bridge to the 30S subunit in the 70S ribosome.

In terms of biological role, this is one of the proteins that bind and probably mediate the attachment of the 5S RNA into the large ribosomal subunit, where it forms part of the central protuberance. In the 70S ribosome it contacts protein S13 of the 30S subunit (bridge B1b), connecting the 2 subunits; this bridge is implicated in subunit movement. Contacts the P site tRNA; the 5S rRNA and some of its associated proteins might help stabilize positioning of ribosome-bound tRNAs. This chain is Large ribosomal subunit protein uL5, found in Clostridium acetobutylicum (strain ATCC 824 / DSM 792 / JCM 1419 / IAM 19013 / LMG 5710 / NBRC 13948 / NRRL B-527 / VKM B-1787 / 2291 / W).